Consider the following 655-residue polypeptide: Proprotein convertase subtilisin/kexin type 4 (655 aa).

The signal sequence occupies residues 1 to 26 (MRPSQTELWLGLTLTLALLAVRWASA). The propeptide occupies 27–110 (QAPIYVSSWA…QQTLRRRVKR (84 aa)). Positions 123-437 (QWYMNKEIQQ…YGLLDAGLLV (315 aa)) constitute a Peptidase S8 domain. Active-site charge relay system residues include Asp-155, His-196, and Ser-370. In terms of domain architecture, P/Homo B spans 446-580 (TKPQKKCAIR…TLLLYGTAED (135 aa)). N-linked (GlcNAc...) asparagine glycosylation occurs at Asn-472.

This sequence belongs to the peptidase S8 family. Furin subfamily. The proPCSK4 form interacts with HSPA5; the interaction takes place at the endoplasmic reticulum. Post-translationally, N-glycosylated. In terms of processing, synthesized in the endoplasmic reticulum as a zymogen, is matured by autocatalytic cleavage between the prodomain and the catalytic domain. As to expression, expressed abundantly in the testis since postnatal Day 16. In testis, strongly detected in round and elongated spermatids as well as spermatocytes. Also observed in residual bodies engulfed by Sertoli cells at spermatogenic stages VIII and IX. In ovaries, expressed in macrophage-like cells of the ovarian theca, interstitium and corpora lutea.

It is found in the cytoplasmic vesicle. It localises to the secretory vesicle. The protein resides in the acrosome membrane. In terms of biological role, proprotein convertase involved in the processing of hormone and other protein precursors at sites comprised of pairs of basic amino acid residues. In males, important for ADAM2 processing as well as other acrosomal proteins with roles in fertilization and critical for normal fertilization events such as sperm capacitation, acrosome reaction and binding of sperm to zona pellucida. Also plays a role in female fertility, involved in the regulation of trophoblast migration and placental development, may be through the proteolytical processing and activation of proteins such as IGF2. May also participate in folliculogenesis in the ovaries. In Mus musculus (Mouse), this protein is Proprotein convertase subtilisin/kexin type 4 (Pcsk4).